The sequence spans 128 residues: Probable 4-amino-4-deoxy-L-arabinose-phosphoundecaprenol flippase subunit ArnF (128 aa).

A helical transmembrane segment spans residues Met-1 to Gly-21. Topologically, residues Tyr-22–Asp-35 are periplasmic. A helical transmembrane segment spans residues Phe-36–Gly-56. The Cytoplasmic portion of the chain corresponds to Tyr-57–Ala-76. A helical transmembrane segment spans residues Tyr-77–Trp-97. Residues Glu-98–Thr-100 are Periplasmic-facing. The chain crosses the membrane as a helical span at residues Phe-101–Leu-121. Topologically, residues Pro-122–Tyr-128 are cytoplasmic.

Belongs to the ArnF family. Heterodimer of ArnE and ArnF.

The protein localises to the cell inner membrane. Its pathway is bacterial outer membrane biogenesis; lipopolysaccharide biosynthesis. Functionally, translocates 4-amino-4-deoxy-L-arabinose-phosphoundecaprenol (alpha-L-Ara4N-phosphoundecaprenol) from the cytoplasmic to the periplasmic side of the inner membrane. This is Probable 4-amino-4-deoxy-L-arabinose-phosphoundecaprenol flippase subunit ArnF from Escherichia fergusonii (strain ATCC 35469 / DSM 13698 / CCUG 18766 / IAM 14443 / JCM 21226 / LMG 7866 / NBRC 102419 / NCTC 12128 / CDC 0568-73).